We begin with the raw amino-acid sequence, 246 residues long: Phycocyanobilin:ferredoxin oxidoreductase (246 aa).

It belongs to the HY2 family.

It catalyses the reaction (2R,3Z)-phycocyanobilin + 4 oxidized [2Fe-2S]-[ferredoxin] = biliverdin IXalpha + 4 reduced [2Fe-2S]-[ferredoxin] + 4 H(+). Functionally, catalyzes the four-electron reduction of biliverdin IX-alpha (2-electron reduction at both the A and D rings); the reaction proceeds via an isolatable 2-electron intermediate, 181,182-dihydrobiliverdin. The polypeptide is Phycocyanobilin:ferredoxin oxidoreductase (Crocosphaera subtropica (strain ATCC 51142 / BH68) (Cyanothece sp. (strain ATCC 51142))).